The chain runs to 467 residues: Thiohydroximate-O-sulfate sulfur/sulfate-lyase (nitrile-forming) NSP3 (467 aa).

Residues 2-143 (AQKLVAQGGE…LHSLGAYVSL (142 aa)) form the Jacalin-type lectin domain. Kelch repeat units follow at residues 177 to 225 (KIYS…VRMV), 230 to 276 (TLYT…SMAA), 280 to 329 (NVYV…VVQG), 331 to 375 (VWIV…ASAA), and 379 to 434 (HIVI…ASTT). Arg237 acts as the Proton donor in catalysis. Positions 237, 270, 292, 321, and 370 each coordinate a (Z)-N-(sulfonatooxy)alkanimidothioate. Arg292 acts as the Proton donor in catalysis. The Fe(2+) site is built by Glu386, Asp390, and His394. Trp429 serves as a coordination point for a (Z)-N-(sulfonatooxy)alkanimidothioate.

It belongs to the jacalin lectin family. The cofactor is Fe(2+). Mainly expressed in roots, and, at low levels, in seedlings and leaves. Observed in seeds.

The catalysed reaction is a (Z)-N-(sulfonatooxy)alkanimidothioate = a nitrile + sulfur + sulfate. It catalyses the reaction (Z)-phenyl-N-(sulfonatooxy)methanimidothioate = phenylacetonitrile + sulfur + sulfate. The enzyme catalyses (Z)-N-(sulfonatooxy)prop-2-enimidothioate = but-3-enenitrile + sulfur + sulfate. In terms of biological role, specifier protein responsible for constitutive and herbivore-induced simple nitrile formation, especially in roots. Promotes simple nitriles, but not epithionitrile or thiocyanate formation. Converts allylglucosinolate and benzylglucosinolate (glucotropaeolin) to their corresponding simple nitriles in the presence of myrosinase. The polypeptide is Thiohydroximate-O-sulfate sulfur/sulfate-lyase (nitrile-forming) NSP3 (Arabidopsis thaliana (Mouse-ear cress)).